Here is a 235-residue protein sequence, read N- to C-terminus: Phosphoribosylaminoimidazole-succinocarboxamide synthase (235 aa).

It belongs to the SAICAR synthetase family.

The enzyme catalyses 5-amino-1-(5-phospho-D-ribosyl)imidazole-4-carboxylate + L-aspartate + ATP = (2S)-2-[5-amino-1-(5-phospho-beta-D-ribosyl)imidazole-4-carboxamido]succinate + ADP + phosphate + 2 H(+). It functions in the pathway purine metabolism; IMP biosynthesis via de novo pathway; 5-amino-1-(5-phospho-D-ribosyl)imidazole-4-carboxamide from 5-amino-1-(5-phospho-D-ribosyl)imidazole-4-carboxylate: step 1/2. This chain is Phosphoribosylaminoimidazole-succinocarboxamide synthase, found in Streptococcus sanguinis (strain SK36).